Here is an 888-residue protein sequence, read N- to C-terminus: Phosphoenolpyruvate carboxylase (888 aa).

Residues His-144 and Lys-553 contribute to the active site.

It belongs to the PEPCase type 1 family. Requires Mg(2+) as cofactor.

It carries out the reaction oxaloacetate + phosphate = phosphoenolpyruvate + hydrogencarbonate. In terms of biological role, forms oxaloacetate, a four-carbon dicarboxylic acid source for the tricarboxylic acid cycle. This Alcanivorax borkumensis (strain ATCC 700651 / DSM 11573 / NCIMB 13689 / SK2) protein is Phosphoenolpyruvate carboxylase.